Here is a 493-residue protein sequence, read N- to C-terminus: Vacuolar-processing enzyme (493 aa).

A signal peptide spans 1–34 (MAVHRSLLNKPTWCRVAFWWWMLVMVMRIQGTNG). Residues 35-53 (KEQDSVIKLPTQEVDAESD) constitute a propeptide that is removed on maturation. The active site involves His-176. Cys-218 (nucleophile) is an active-site residue. An intrachain disulfide couples Cys-251 to Cys-265. Residue Asn-318 is glycosylated (N-linked (GlcNAc...) asparagine). 2 cysteine pairs are disulfide-bonded: Cys-429–Cys-459 and Cys-441–Cys-476.

It belongs to the peptidase C13 family.

In terms of biological role, asparagine-specific endopeptidase involved in the processing of vacuolar seed protein precursors into the mature forms. This Phaseolus vulgaris (Kidney bean) protein is Vacuolar-processing enzyme.